We begin with the raw amino-acid sequence, 449 residues long: D-inositol 3-phosphate glycosyltransferase (449 aa).

Histidine 43 provides a ligand contact to 1D-myo-inositol 3-phosphate. Residues 49 to 50 (QP) and glycine 57 contribute to the UDP-N-acetyl-alpha-D-glucosamine site. 1D-myo-inositol 3-phosphate is bound by residues 54 to 59 (DAGGMN), lysine 112, tyrosine 145, threonine 169, and arginine 189. Positions 263, 268, and 324 each coordinate UDP-N-acetyl-alpha-D-glucosamine. Mg(2+) is bound by residues tyrosine 333, arginine 334, and alanine 336. Residues glutamate 346 and glutamate 354 each coordinate UDP-N-acetyl-alpha-D-glucosamine. Threonine 360 is a binding site for Mg(2+).

This sequence belongs to the glycosyltransferase group 1 family. MshA subfamily. Homodimer.

The catalysed reaction is 1D-myo-inositol 3-phosphate + UDP-N-acetyl-alpha-D-glucosamine = 1D-myo-inositol 2-acetamido-2-deoxy-alpha-D-glucopyranoside 3-phosphate + UDP + H(+). In terms of biological role, catalyzes the transfer of a N-acetyl-glucosamine moiety to 1D-myo-inositol 3-phosphate to produce 1D-myo-inositol 2-acetamido-2-deoxy-glucopyranoside 3-phosphate in the mycothiol biosynthesis pathway. The polypeptide is D-inositol 3-phosphate glycosyltransferase (Segniliparus rotundus (strain ATCC BAA-972 / CDC 1076 / CIP 108378 / DSM 44985 / JCM 13578)).